The following is a 396-amino-acid chain: Tryptophan synthase beta chain (396 aa).

An N6-(pyridoxal phosphate)lysine modification is found at K88.

Belongs to the TrpB family. As to quaternary structure, tetramer of two alpha and two beta chains. Pyridoxal 5'-phosphate is required as a cofactor.

It carries out the reaction (1S,2R)-1-C-(indol-3-yl)glycerol 3-phosphate + L-serine = D-glyceraldehyde 3-phosphate + L-tryptophan + H2O. The protein operates within amino-acid biosynthesis; L-tryptophan biosynthesis; L-tryptophan from chorismate: step 5/5. Functionally, the beta subunit is responsible for the synthesis of L-tryptophan from indole and L-serine. The polypeptide is Tryptophan synthase beta chain (Shewanella oneidensis (strain ATCC 700550 / JCM 31522 / CIP 106686 / LMG 19005 / NCIMB 14063 / MR-1)).